The following is a 129-amino-acid chain: Small ribosomal subunit protein uS9 (129 aa).

The protein belongs to the universal ribosomal protein uS9 family.

The polypeptide is Small ribosomal subunit protein uS9 (Helicobacter pylori (strain Shi470)).